A 207-amino-acid chain; its full sequence is Large ribosomal subunit protein uL4 (207 aa).

The tract at residues 50-76 (AVKNRSAVSGGGRKPWKQKGTGRARQG) is disordered.

Belongs to the universal ribosomal protein uL4 family. In terms of assembly, part of the 50S ribosomal subunit.

Functionally, one of the primary rRNA binding proteins, this protein initially binds near the 5'-end of the 23S rRNA. It is important during the early stages of 50S assembly. It makes multiple contacts with different domains of the 23S rRNA in the assembled 50S subunit and ribosome. Its function is as follows. Forms part of the polypeptide exit tunnel. The sequence is that of Large ribosomal subunit protein uL4 from Staphylococcus aureus (strain MRSA252).